A 128-amino-acid polypeptide reads, in one-letter code: MQRHMLKSKIHRAAVTHCELHYEGSCAIDEDLLEAANIVENERIDIWNINNGERFSTYAIKGERGSGMISLNGSAARRAQLGDLVIIAAFAMIDEEELKAGWKPDLVFVDEGNKIKGSRDHVPTQNWT.

Catalysis depends on Ser-25, which acts as the Schiff-base intermediate with substrate; via pyruvic acid. Ser-25 is modified (pyruvic acid (Ser)). Residue Thr-57 coordinates substrate. Catalysis depends on Tyr-58, which acts as the Proton donor. 73 to 75 (GSA) contributes to the substrate binding site.

Belongs to the PanD family. As to quaternary structure, heterooctamer of four alpha and four beta subunits. It depends on pyruvate as a cofactor. Is synthesized initially as an inactive proenzyme, which is activated by self-cleavage at a specific serine bond to produce a beta-subunit with a hydroxyl group at its C-terminus and an alpha-subunit with a pyruvoyl group at its N-terminus.

The protein localises to the cytoplasm. The enzyme catalyses L-aspartate + H(+) = beta-alanine + CO2. It functions in the pathway cofactor biosynthesis; (R)-pantothenate biosynthesis; beta-alanine from L-aspartate: step 1/1. In terms of biological role, catalyzes the pyruvoyl-dependent decarboxylation of aspartate to produce beta-alanine. The sequence is that of Aspartate 1-decarboxylase from Burkholderia thailandensis (strain ATCC 700388 / DSM 13276 / CCUG 48851 / CIP 106301 / E264).